The primary structure comprises 625 residues: Phosphatidylinositol/phosphatidylcholine transfer protein SFH13 (625 aa).

Residues 143 to 318 enclose the CRAL-TRIO domain; the sequence is ELEEVLQYYP…FLGGSCSCFG (176 aa).

It belongs to the SFH family.

It localises to the golgi apparatus membrane. The protein resides in the cell membrane. Functionally, required for transport of secretory proteins from the Golgi complex. Catalyzes the transfer of phosphatidylinositol and phosphatidylcholine between membranes in vitro. In Arabidopsis thaliana (Mouse-ear cress), this protein is Phosphatidylinositol/phosphatidylcholine transfer protein SFH13 (SFH13).